A 620-amino-acid chain; its full sequence is Chaperone protein HscA homolog (620 aa).

This sequence belongs to the heat shock protein 70 family.

Functionally, chaperone involved in the maturation of iron-sulfur cluster-containing proteins. Has a low intrinsic ATPase activity which is markedly stimulated by HscB. The sequence is that of Chaperone protein HscA homolog from Pseudomonas entomophila (strain L48).